Here is a 749-residue protein sequence, read N- to C-terminus: Cytosolic phospholipase A2 (749 aa).

A phospholipid binding region spans residues 1–178; sequence MSFIDPYQHI…MKKLLGPKKS (178 aa). Serine 2 carries the post-translational modification Phosphoserine. Residues 6–122 form the C2 domain; the sequence is PYQHIIVEHQ…KVGEKKEVPF (117 aa). Aspartate 40, threonine 41, aspartate 43, asparagine 65, aspartate 93, alanine 94, and asparagine 95 together coordinate Ca(2+). The PLA2c domain occupies 140–740; the sequence is SCPDLRFSMA…SNVEARRFFN (601 aa). Serine 228 serves as the catalytic Nucleophile. Threonine 268 is subject to Phosphothreonine. The disordered stretch occupies residues 427 to 456; it reads KHIVSNDSSDSDDESQEPKGTENEDAERDY. Phosphoserine is present on residues serine 434, serine 435, and serine 437. The residue at position 505 (serine 505) is a Phosphoserine; by MAPK. Serine 515 bears the Phosphoserine mark. Lysine 541 participates in a covalent cross-link: Glycyl lysine isopeptide (Lys-Gly) (interchain with G-Cter in SUMO2). Residue aspartate 549 is the Proton acceptor of the active site. Lysine 606 is covalently cross-linked (Glycyl lysine isopeptide (Lys-Gly) (interchain with G-Cter in SUMO2)). Serine 727 and serine 729 each carry phosphoserine.

Interacts with KAT5. Post-translationally, phosphorylated at both Ser-505 and Ser-727 in response to mitogenic stimuli.

The protein localises to the cytoplasm. It is found in the golgi apparatus membrane. It localises to the nucleus envelope. It carries out the reaction a 1,2-diacyl-sn-glycero-3-phosphocholine + H2O = a 1-acyl-sn-glycero-3-phosphocholine + a fatty acid + H(+). The catalysed reaction is a 1-O-alkyl-2-acyl-sn-glycero-3-phosphocholine + H2O = a 1-O-alkyl-sn-glycero-3-phosphocholine + a fatty acid + H(+). The enzyme catalyses a 1-acyl-sn-glycero-3-phosphocholine + H2O = sn-glycerol 3-phosphocholine + a fatty acid + H(+). It catalyses the reaction 1-hexadecanoyl-2-(5Z,8Z,11Z,14Z-eicosatetraenoyl)-sn-glycero-3-phosphocholine + H2O = 1-hexadecanoyl-sn-glycero-3-phosphocholine + (5Z,8Z,11Z,14Z)-eicosatetraenoate + H(+). It carries out the reaction 1,2-di-(5Z,8Z,11Z,14Z-eicosatetraenoyl)-sn-glycero-3-phosphocholine + H2O = 1-(5Z,8Z,11Z,14Z-eicosatetraenoyl)-sn-glycero-3-phosphocholine + (5Z,8Z,11Z,14Z)-eicosatetraenoate + H(+). The catalysed reaction is 1-octadecanoyl-2-(5Z,8Z,11Z,14Z-eicosatetraenoyl)-sn-glycero-3-phosphocholine + H2O = 1-octadecanoyl-sn-glycero-3-phosphocholine + (5Z,8Z,11Z,14Z)-eicosatetraenoate + H(+). The enzyme catalyses 1-hexadecanoyl-2-(9Z,12Z-octadecadienoyl)-sn-glycero-3-phosphocholine + H2O = (9Z,12Z)-octadecadienoate + 1-hexadecanoyl-sn-glycero-3-phosphocholine + H(+). It catalyses the reaction 1-octadecanoyl-2-(9Z,12Z,15Z-octadecatrienoyl)-sn-glycero-3-phosphocholine + H2O = (9Z,12Z,15Z)-octadecatrienoate + 1-octadecanoyl-sn-glycero-3-phosphocholine + H(+). It carries out the reaction 1-(5Z,8Z,11Z,14Z-eicosatetraenoyl)-2-hexadecanoyl-sn-glycero-3-phosphocholine + H2O = 1-(5Z,8Z,11Z,14Z-eicosatetraenoyl)-sn-glycero-3-phosphocholine + hexadecanoate + H(+). The catalysed reaction is 1-O-hexadecyl-2-(5Z,8Z,11Z,14Z)-eicosatetraenoyl-sn-glycero-3-phosphocholine + H2O = 1-O-hexadecyl-sn-glycero-3-phosphocholine + (5Z,8Z,11Z,14Z)-eicosatetraenoate + H(+). The enzyme catalyses 1,2-di-(9Z-octadecenoyl)-sn-glycero-3-phospho-(1'-sn-glycerol) + H2O = 1-(9Z-octadecenoyl)-sn-glycero-3-phospho-(1'-sn-glycerol) + (9Z)-octadecenoate + H(+). It catalyses the reaction 1-octadecanoyl-2-(5Z,8Z,11Z,14Z-eicosatetraenoyl)-sn-glycero-3-phosphate + H2O = 1-octadecanoyl-sn-glycero-3-phosphate + (5Z,8Z,11Z,14Z)-eicosatetraenoate + H(+). It carries out the reaction 1-hexadecanoyl-sn-glycero-3-phosphocholine + H2O = sn-glycerol 3-phosphocholine + hexadecanoate + H(+). The catalysed reaction is 2-(prostaglandin E2)-sn-glycero-3-phosphoethanolamine + H2O = sn-glycero-3-phosphoethanolamine + prostaglandin E2 + H(+). The enzyme catalyses 2-[(15S)-hydroxy-(5Z,8Z,11Z,13E)-eicosatetraenoyl]-sn-glycero-3-phosphocholine + H2O = (15S)-hydroxy-(5Z,8Z,11Z,13E)-eicosatetraenoate + sn-glycerol 3-phosphocholine + H(+). It catalyses the reaction 2-[(15R)-hydroxy-(5Z,8Z,11Z,13E)-eicosatetraenoyl]-sn-glycero-3-phosphocholine + H2O = (15R)-hydroxy-(5Z,8Z,11Z,13E)-eicosatetraenoate + sn-glycerol 3-phosphocholine + H(+). It carries out the reaction 2-(prostaglandin E2)-sn-glycero-3-phosphocholine + H2O = prostaglandin E2 + sn-glycerol 3-phosphocholine + H(+). The catalysed reaction is 2-[(11R)-hydroxy-(5Z,8Z,12E,14Z)-eicosatetraenoyl]-sn-glycero-3-phosphocholine + H2O = (11R)-hydroxy-(5Z,8Z,12E,14Z)-eicosatetraenoate + sn-glycerol 3-phosphocholine + H(+). The enzyme catalyses 1-(5Z,8Z,11Z,14Z-eicosatetraenoyl)-2-O-hexadecyl-sn-glycero-3-phosphocholine + H2O = 2-O-hexadecyl-sn-glycero-3-phosphocholine + (5Z,8Z,11Z,14Z)-eicosatetraenoate + H(+). It catalyses the reaction 1-octadecanoyl-2-(5Z,8Z,11Z,14Z-eicosatetraenoyl)-sn-glycero-3-phosphocholine + glycerol = 1-(5Z,8Z,11Z,14Z-eicosatetraenoyl)-glycerol + 1-octadecanoyl-sn-glycero-3-phosphocholine. It carries out the reaction 1-octadecanoyl-2-(9Z,12Z,15Z-octadecatrienoyl)-sn-glycero-3-phosphocholine + glycerol = 1-(9Z,12Z,15Z-octadecatrienoyl)-glycerol + 1-octadecanoyl-sn-glycero-3-phosphocholine. Its pathway is membrane lipid metabolism; glycerophospholipid metabolism. The protein operates within lipid metabolism; arachidonate metabolism. It participates in lipid metabolism; prostaglandin biosynthesis. It functions in the pathway lipid metabolism; leukotriene B4 biosynthesis. Its activity is regulated as follows. Activated by cytosolic calcium, which is necessary for binding to membrane lipids. Activated by phosphorylation in response to mitogenic stimuli. Its function is as follows. Has primarily calcium-dependent phospholipase and lysophospholipase activities, with a major role in membrane lipid remodeling and biosynthesis of lipid mediators of the inflammatory response. Plays an important role in embryo implantation and parturition through its ability to trigger prostanoid production. Preferentially hydrolyzes the ester bond of the fatty acyl group attached at sn-2 position of phospholipids (phospholipase A2 activity). Selectively hydrolyzes sn-2 arachidonoyl group from membrane phospholipids, providing the precursor for eicosanoid biosynthesis via the cyclooxygenase pathway. In an alternative pathway of eicosanoid biosynthesis, hydrolyzes sn-2 fatty acyl chain of eicosanoid lysophopholipids to release free bioactive eicosanoids. Hydrolyzes the ester bond of the fatty acyl group attached at sn-1 position of phospholipids (phospholipase A1 activity) only if an ether linkage rather than an ester linkage is present at the sn-2 position. This hydrolysis is not stereospecific. Has calcium-independent phospholipase A2 and lysophospholipase activities in the presence of phosphoinositides. Has O-acyltransferase activity. Catalyzes the transfer of fatty acyl chains from phospholipids to a primary hydroxyl group of glycerol (sn-1 or sn-3), potentially contributing to monoacylglycerol synthesis. In Equus caballus (Horse), this protein is Cytosolic phospholipase A2 (PLA2G4A).